Reading from the N-terminus, the 430-residue chain is Adenylosuccinate synthetase (430 aa).

Residues 13–19 (GDEGKGK) and 41–43 (GHT) contribute to the GTP site. The Proton acceptor role is filled by Asp14. Mg(2+)-binding residues include Asp14 and Gly41. Residues 14–17 (DEGK), 39–42 (NAGH), Thr130, Arg144, Gln225, Thr240, and Arg304 each bind IMP. The Proton donor role is filled by His42. 300-306 (ASTGRPR) contributes to the substrate binding site. GTP contacts are provided by residues Arg306, 332 to 334 (KLD), and 414 to 416 (STG).

The protein belongs to the adenylosuccinate synthetase family. As to quaternary structure, homodimer. It depends on Mg(2+) as a cofactor.

It localises to the cytoplasm. It carries out the reaction IMP + L-aspartate + GTP = N(6)-(1,2-dicarboxyethyl)-AMP + GDP + phosphate + 2 H(+). It functions in the pathway purine metabolism; AMP biosynthesis via de novo pathway; AMP from IMP: step 1/2. Its function is as follows. Plays an important role in the de novo pathway of purine nucleotide biosynthesis. Catalyzes the first committed step in the biosynthesis of AMP from IMP. The sequence is that of Adenylosuccinate synthetase from Stenotrophomonas maltophilia (strain R551-3).